A 122-amino-acid polypeptide reads, in one-letter code: Large ribosomal subunit protein uL14 (122 aa).

The protein belongs to the universal ribosomal protein uL14 family. In terms of assembly, part of the 50S ribosomal subunit. Forms a cluster with proteins L3 and L19. In the 70S ribosome, L14 and L19 interact and together make contacts with the 16S rRNA in bridges B5 and B8.

Binds to 23S rRNA. Forms part of two intersubunit bridges in the 70S ribosome. This chain is Large ribosomal subunit protein uL14, found in Solibacter usitatus (strain Ellin6076).